A 609-amino-acid polypeptide reads, in one-letter code: UvrABC system protein C (609 aa).

Residues 16–94 (SSPGVYRMYD…IKQYMPKYNV (79 aa)) enclose the GIY-YIG domain. In terms of domain architecture, UVR spans 203 to 238 (HQVMSVLVGKMEQAASDMRYEQAALYRDQITALRRV).

This sequence belongs to the UvrC family. Interacts with UvrB in an incision complex.

Its subcellular location is the cytoplasm. Functionally, the UvrABC repair system catalyzes the recognition and processing of DNA lesions. UvrC both incises the 5' and 3' sides of the lesion. The N-terminal half is responsible for the 3' incision and the C-terminal half is responsible for the 5' incision. The chain is UvrABC system protein C from Shewanella halifaxensis (strain HAW-EB4).